The following is a 410-amino-acid chain: Sulfate adenylyltransferase (410 aa).

Belongs to the sulfate adenylyltransferase family.

The catalysed reaction is sulfate + ATP + H(+) = adenosine 5'-phosphosulfate + diphosphate. It participates in sulfur metabolism; hydrogen sulfide biosynthesis; sulfite from sulfate: step 1/3. In Syntrophobacter fumaroxidans (strain DSM 10017 / MPOB), this protein is Sulfate adenylyltransferase.